Here is a 542-residue protein sequence, read N- to C-terminus: Phosphoenolpyruvate carboxykinase (ATP) (542 aa).

Substrate-binding residues include Arg-67, Tyr-208, and Lys-214. Residues Lys-214, His-233, and 249–257 contribute to the ATP site; that span reads GLSGTGKTT. Residues Lys-214 and His-233 each coordinate Mn(2+). Asp-270 provides a ligand contact to Mn(2+). ATP-binding positions include Glu-298, Arg-334, 450 to 451, and Thr-456; that span reads RI. Residue Arg-334 participates in substrate binding.

The protein belongs to the phosphoenolpyruvate carboxykinase (ATP) family. Monomer. The cofactor is Mn(2+).

The protein resides in the cytoplasm. It carries out the reaction oxaloacetate + ATP = phosphoenolpyruvate + ADP + CO2. The protein operates within carbohydrate biosynthesis; gluconeogenesis. Involved in the gluconeogenesis. Catalyzes the conversion of oxaloacetate (OAA) to phosphoenolpyruvate (PEP) through direct phosphoryl transfer between the nucleoside triphosphate and OAA. The sequence is that of Phosphoenolpyruvate carboxykinase (ATP) from Vibrio campbellii (strain ATCC BAA-1116).